The sequence spans 344 residues: Ferrochelatase (344 aa).

Fe cation contacts are provided by His-211 and Glu-292.

It belongs to the ferrochelatase family.

The protein resides in the cytoplasm. The enzyme catalyses heme b + 2 H(+) = protoporphyrin IX + Fe(2+). The protein operates within porphyrin-containing compound metabolism; protoheme biosynthesis; protoheme from protoporphyrin-IX: step 1/1. Its function is as follows. Catalyzes the ferrous insertion into protoporphyrin IX. The chain is Ferrochelatase from Methylobacillus flagellatus (strain ATCC 51484 / DSM 6875 / VKM B-1610 / KT).